The chain runs to 671 residues: Polyadenylate-binding protein 8 (671 aa).

RRM domains are found at residues 45–123 (TSLY…YSVR), 133–210 (GNIF…PFVH), 224–301 (TNVY…KAQK), and 327–404 (SNLY…LAQR). The interval 467–526 (LVPGMRPGGSPMPNFFMPMMQQGQQQQQQQQQQQRPGGGRRGALPQPQQPSPMMQQQMHP) is disordered. 2 stretches are compositionally biased toward low complexity: residues 483–501 (MPMM…QQQR) and 508–525 (GALP…QQMH). One can recognise a PABC domain in the interval 573-650 (PIVALATRLA…AMDVLRSVAQ (78 aa)).

This sequence belongs to the polyadenylate-binding protein type-1 family. Interacts with ERD15/CID1. Interacts with Turnip mosaic virus (TuMV) VPg-Pro and RNA-dependent RNA polymerase (RdRp). Expressed predominantly in immature flowers.

The protein localises to the cytoplasm. It localises to the nucleus. In terms of biological role, binds the poly(A) tail of mRNA. Appears to be an important mediator of the multiple roles of the poly(A) tail in mRNA biogenesis, stability and translation. During infection with potyvirus TuMV, acts as a potential integral component of the viral replicase complex that could play an important role in the regulation of potyviral RNA-dependent RNA polymerase (RdRp). The protein is Polyadenylate-binding protein 8 (PAB8) of Arabidopsis thaliana (Mouse-ear cress).